Consider the following 858-residue polypeptide: Gamma-secretase-activating protein (858 aa).

Belongs to the GSAP family. Interacts with APP; specifically interacts with the CTF-alpha product of APP. Interacts with the gamma-secretase complex. Post-translationally, the protein is first synthesized as a holoprotein form of 98 kDa and rapidly processed into the gamma-secretase-activating protein 16 kDa C-terminal form, which constitutes the predominant form.

It is found in the golgi apparatus. The protein resides in the trans-Golgi network. Regulator of gamma-secretase activity, which specifically activates the production of amyloid-beta protein (amyloid-beta protein 40 and amyloid-beta protein 42), without affecting the cleavage of other gamma-secretase targets such has Notch. The gamma-secretase complex is an endoprotease complex that catalyzes the intramembrane cleavage of integral membrane proteins such as Notch receptors and APP (amyloid-beta precursor protein). Specifically promotes the gamma-cleavage of APP CTF-alpha (also named APP-CTF) by the gamma-secretase complex to generate amyloid-beta, while it reduces the epsilon-cleavage of APP CTF-alpha, leading to a low production of AICD. In Mus musculus (Mouse), this protein is Gamma-secretase-activating protein (Gsap).